We begin with the raw amino-acid sequence, 339 residues long: UDP-N-acetylglucosamine--N-acetylmuramyl-(pentapeptide) pyrophosphoryl-undecaprenol N-acetylglucosamine transferase (339 aa).

UDP-N-acetyl-alpha-D-glucosamine-binding positions include 11–13, asparagine 127, arginine 170, serine 188, isoleucine 235, and glutamine 280; that span reads TGG.

This sequence belongs to the glycosyltransferase 28 family. MurG subfamily.

The protein localises to the cell inner membrane. It carries out the reaction di-trans,octa-cis-undecaprenyl diphospho-N-acetyl-alpha-D-muramoyl-L-alanyl-D-glutamyl-meso-2,6-diaminopimeloyl-D-alanyl-D-alanine + UDP-N-acetyl-alpha-D-glucosamine = di-trans,octa-cis-undecaprenyl diphospho-[N-acetyl-alpha-D-glucosaminyl-(1-&gt;4)]-N-acetyl-alpha-D-muramoyl-L-alanyl-D-glutamyl-meso-2,6-diaminopimeloyl-D-alanyl-D-alanine + UDP + H(+). Its pathway is cell wall biogenesis; peptidoglycan biosynthesis. In terms of biological role, cell wall formation. Catalyzes the transfer of a GlcNAc subunit on undecaprenyl-pyrophosphoryl-MurNAc-pentapeptide (lipid intermediate I) to form undecaprenyl-pyrophosphoryl-MurNAc-(pentapeptide)GlcNAc (lipid intermediate II). The chain is UDP-N-acetylglucosamine--N-acetylmuramyl-(pentapeptide) pyrophosphoryl-undecaprenol N-acetylglucosamine transferase from Thermotoga neapolitana (strain ATCC 49049 / DSM 4359 / NBRC 107923 / NS-E).